The following is a 233-amino-acid chain: Ribosomal RNA small subunit methyltransferase G (233 aa).

Residues 1-25 form a disordered region; sequence MASRQSPMAVSQPDHADRSAALQLT. S-adenosyl-L-methionine contacts are provided by Gly-85, Phe-90, and Arg-155.

It belongs to the methyltransferase superfamily. RNA methyltransferase RsmG family.

The protein localises to the cytoplasm. The catalysed reaction is guanosine(527) in 16S rRNA + S-adenosyl-L-methionine = N(7)-methylguanosine(527) in 16S rRNA + S-adenosyl-L-homocysteine. Its function is as follows. Specifically methylates the N7 position of guanine in position 527 of 16S rRNA. The protein is Ribosomal RNA small subunit methyltransferase G of Rhodopseudomonas palustris (strain BisB5).